Consider the following 479-residue polypeptide: Ribosomal RNA small subunit methyltransferase F (479 aa).

S-adenosyl-L-methionine-binding positions include Ala-128–Lys-134, Glu-152, Asp-179, and Asp-197. Cys-250 acts as the Nucleophile in catalysis.

The protein belongs to the class I-like SAM-binding methyltransferase superfamily. RsmB/NOP family.

The protein localises to the cytoplasm. The enzyme catalyses cytidine(1407) in 16S rRNA + S-adenosyl-L-methionine = 5-methylcytidine(1407) in 16S rRNA + S-adenosyl-L-homocysteine + H(+). Its function is as follows. Specifically methylates the cytosine at position 1407 (m5C1407) of 16S rRNA. The chain is Ribosomal RNA small subunit methyltransferase F from Shewanella halifaxensis (strain HAW-EB4).